The chain runs to 464 residues: ERO1-like protein alpha (464 aa).

A signal peptide spans 1–23; sequence MGRAWGLLVGLLGVVWLLRLGHG. Disulfide bonds link Cys35–Cys48, Cys37–Cys46, Cys85–Cys387, Cys94–Cys99, Cys94–Cys130, Cys99–Cys104, Cys207–Cys237, and Cys390–Cys393. 3 positions are modified to phosphoserine: Ser106, Ser142, and Ser144. Residues Arg186, Thr188, and Trp199 each contribute to the FAD site. FAD-binding residues include Ser248 and His251. A glycan (N-linked (GlcNAc...) asparagine) is linked at Asn276. FAD contacts are provided by Arg283 and Arg296. N-linked (GlcNAc...) asparagine glycosylation occurs at Asn380.

Belongs to the EROs family. As to quaternary structure, predominantly monomer. May function both as a monomer and a homodimer. Interacts with PDILT. Interacts with ERP44; the interaction results in retention of ERO1A in the endoplasmic reticulum. It depends on FAD as a cofactor. Post-translationally, N-glycosylated. The Cys-94/Cys-99 and Cys-390/Cys-393 disulfide bonds constitute the redox-active center. The Cys-94/Cys-99 disulfide bond may accept electron from P4HB and funnel them to the active site disulfide Cys-390/Cys-393. The regulatory Cys-99/Cys-104 disulfide bond stabilizes the other regulatory bond Cys-94/Cys-130. In terms of processing, phosphorylated on Ser-144 by FAM20C in the Golgi which increases its enzymatic activity. Phosphorylation is induced by lactation. It is also induced by hypoxia and reductive stress. Widely expressed (at protein level). In the mammary gland, expressed at higher levels in lactating mice than in virgin mice (at protein level).

It is found in the endoplasmic reticulum membrane. Its subcellular location is the golgi apparatus lumen. The protein resides in the secreted. It localises to the cell projection. The protein localises to the dendrite. Enzyme activity is tightly regulated to prevent the accumulation of reactive oxygen species in the endoplasmic reticulum. Reversibly down-regulated by the formation of disulfide bonds between the active site Cys-94 and Cys-130, and between Cys-99 and Cys-104. Glutathione may be required to regulate its activity in the endoplasmic reticulum. Its function is as follows. Oxidoreductase involved in disulfide bond formation in the endoplasmic reticulum. Efficiently reoxidizes P4HB/PDI, the enzyme catalyzing protein disulfide formation, in order to allow P4HB to sustain additional rounds of disulfide formation. Following P4HB reoxidation, passes its electrons to molecular oxygen via FAD, leading to the production of reactive oxygen species (ROS) in the cell. Required for the proper folding of immunoglobulins. Plays an important role in ER stress-induced, CHOP-dependent apoptosis by activating the inositol 1,4,5-trisphosphate receptor IP3R1. The protein is ERO1-like protein alpha of Mus musculus (Mouse).